The sequence spans 220 residues: Claudin-22 (220 aa).

Residues 1 to 10 (MALVFRTVAQ) lie on the Cytoplasmic side of the membrane. The helical transmembrane segment at 11 to 30 (LAGVSLSLLGWVLSCLTNYL) threads the bilayer. At 31-81 (PHWKNLNLDLNEMENWTMGLWQTCVIQEEVGMQCKDFDSFLALPAELRVSR) the chain is on the extracellular side. Residues 82-102 (ILMFLSNGLGFLGLLVSGFGL) form a helical membrane-spanning segment. At 103-117 (DCLRIGESQRDLKRR) the chain is on the cytoplasmic side. Residues 118–138 (LLILGGILSWASGVTALVPVS) traverse the membrane as a helical segment. The Extracellular segment spans residues 139–164 (WVAHKTVQEFWDENVPDFVPRWEFGE). A helical transmembrane segment spans residues 165–185 (ALFLGWFAGLSLLLGGCLLHC). Over 186 to 220 (AACSSHAPLASGHYAVAQTQDHHQELETRNTNLKH) the chain is Cytoplasmic.

It belongs to the claudin family.

Its subcellular location is the cell junction. The protein resides in the tight junction. It is found in the cell membrane. Functionally, plays a major role in tight junction-specific obliteration of the intercellular space, through calcium-independent cell-adhesion activity. This chain is Claudin-22 (CLDN22), found in Homo sapiens (Human).